We begin with the raw amino-acid sequence, 438 residues long: GTPase Der (438 aa).

2 EngA-type G domains span residues 4–168 (PLVT…KSEG) and 177–352 (IKIA…DNYS). Residues 10 to 17 (GRPNVGKS), 57 to 61 (DTGGI), 120 to 123 (NKID), 183 to 190 (GKPNVGKS), 230 to 234 (DTAGL), and 295 to 298 (NKWD) contribute to the GTP site. Residues 353 to 437 (KRIATGVLND…GIKMIFKERK (85 aa)) enclose the KH-like domain.

Belongs to the TRAFAC class TrmE-Era-EngA-EngB-Septin-like GTPase superfamily. EngA (Der) GTPase family. In terms of assembly, associates with the 50S ribosomal subunit.

In terms of biological role, GTPase that plays an essential role in the late steps of ribosome biogenesis. The sequence is that of GTPase Der from Clostridium acetobutylicum (strain ATCC 824 / DSM 792 / JCM 1419 / IAM 19013 / LMG 5710 / NBRC 13948 / NRRL B-527 / VKM B-1787 / 2291 / W).